A 741-amino-acid polypeptide reads, in one-letter code: MAASSSLSTLSHHQTLLSHPKTHLPTTPASSLLVPTTSSKVNGVLLKSTSSSRRLRVGSASAVVRAAAVEALESTDIDQLVEKSVNTIRFLAIDAVEKANSGHPGLPMGCAPMGHILYDEIMRYNPKNPYWFNRDRFVLSAGHGCMLQYALLHLAGYDSVLEEDLKTFRQWGSRIPGHPENFETPGVEVTTGPLGQGIANAVGLALAEKHLAARFNKPDAEIVDHYTYVILGDGCQMEGIAQEACSLAGHWGLGKLIAFYDDNHISIDGDTAIAFTESVDLRFEALGWHVIWVKNGNTGYDEIRAAIKEAKTVTDKPTLIKVTTTIGFGSPNKSNSYSVHGSALGSKEVEATRQNLGWPYEPFHVPEEVKKHWSRHTPEGASLEAEWNTKFAEYEKKYPEDATEFKSITTGEFPAGWEKALPTYTPETPGDATRNLSQQCLNALAKVIPGLLGGSADLASSNMTLLKMFGDFRRTHRKKETFRFGVREHGMGAICNGICLHSPGFVPYCATFFVFTDYMRGAMRISALSEAGVIYVMTHDSIGLGEDGPTHQPIEALSKFPAMPNILMLRPADGNETAGSYKVAVENRKTPSILALSRKKLPNLPGTSIEGVEKGGYTITDNSSGNKPDVILIGTGSELEIAAKAGDELRKEGKAVRVVSFVSWELFEKQSDEYKESVLPSDVTARVSIEAGSTFGWHKIVGSKGKAIGIDKFGASAPAGKIYQEYGITVEAVVEAAKSVC.

The span at 1-19 (MAASSSLSTLSHHQTLLSH) shows a compositional bias: low complexity. The tract at residues 1–33 (MAASSSLSTLSHHQTLLSHPKTHLPTTPASSLL) is disordered. A chloroplast-targeting transit peptide spans 1–66 (MAASSSLSTL…VGSASAVVRA (66 aa)). Residues 24 to 33 (LPTTPASSLL) show a composition bias toward polar residues. His103 lines the substrate pocket. Residues His143 and 192–194 (GPL) contribute to the thiamine diphosphate site. Asp233 is a binding site for Mg(2+). Thiamine diphosphate is bound by residues Gly234 and Asn263. Asn263 and Ile265 together coordinate Mg(2+). Positions 340, 434, and 461 each coordinate substrate. His340 provides a ligand contact to thiamine diphosphate. The thiamine diphosphate site is built by Glu488 and Phe515. Glu488 serves as the catalytic Proton donor. Substrate-binding residues include His539, Asp547, and Arg598.

Belongs to the transketolase family. In terms of assembly, homodimer. The cofactor is Mg(2+). Ca(2+) serves as cofactor. Mn(2+) is required as a cofactor. It depends on Co(2+) as a cofactor. Requires thiamine diphosphate as cofactor.

It localises to the plastid. Its subcellular location is the chloroplast thylakoid membrane. It carries out the reaction D-sedoheptulose 7-phosphate + D-glyceraldehyde 3-phosphate = aldehydo-D-ribose 5-phosphate + D-xylulose 5-phosphate. It functions in the pathway carbohydrate biosynthesis; Calvin cycle. Catalyzes the reversible transfer of a two-carbon ketol group from fructose-6-phosphate or sedoheptulose-7-phosphate to glyceraldehyde-3-phosphate to yield xylulose-5-phosphate and erythrose-4-phosphate or ribose-5-phosphate, respectively. This Spinacia oleracea (Spinach) protein is Transketolase, chloroplastic.